We begin with the raw amino-acid sequence, 731 residues long: Catalase-peroxidase (731 aa).

The disordered stretch occupies residues 1-24 (MSTEPNCPFSGNARKHTAAGAPSN). The segment at residues 96–219 (WHSAGTYRVS…LGAVQMGLIY (124 aa)) is a cross-link (tryptophyl-tyrosyl-methioninium (Trp-Tyr) (with M-245)). His97 acts as the Proton acceptor in catalysis. Positions 219–245 (YVNPEGPNGNPDPIAAARDIRETFARM) form a cross-link, tryptophyl-tyrosyl-methioninium (Tyr-Met) (with W-96). His260 is a binding site for heme b. A disordered region spans residues 339–365 (GAQQWKPKGDAGAGTVPDAHDPSKRHA).

It belongs to the peroxidase family. Peroxidase/catalase subfamily. In terms of assembly, homodimer or homotetramer. The cofactor is heme b. Post-translationally, formation of the three residue Trp-Tyr-Met cross-link is important for the catalase, but not the peroxidase activity of the enzyme.

The enzyme catalyses H2O2 + AH2 = A + 2 H2O. It catalyses the reaction 2 H2O2 = O2 + 2 H2O. Functionally, bifunctional enzyme with both catalase and broad-spectrum peroxidase activity. This chain is Catalase-peroxidase, found in Polaromonas sp. (strain JS666 / ATCC BAA-500).